We begin with the raw amino-acid sequence, 344 residues long: MGCNPPYLLSYRLRLLLLFTLCLTVLGWATSNYFVGAIQVIPRAKNFMATLHKVMYLGNEETLGHGAAMKKAELANCPSVSPNLRGQNKLVFKPDLTLEEVQAKNPKVSRGRYRPEECKALQRVAVLIPHRNREKHLIYLLEHLHPFLQRQQLDYGIYVIHQTGSKKFNRAKLLNVGYLEALKEENWDCFIFHDVDLVPENDFNLYTCGDQPKHLVVGRNSTGYRLRYSKYFGGVTALSREQFFKVNGFSNNYWGWGGEDDDLRLRVELHKMKISRPKPDVGKYTMIFHTRDKGNEVNGSRMKLLQQMSRVWKTDGLSSCSYRLLSVEHNPLYANITVDFWTAA.

Topologically, residues 1-12 are cytoplasmic; it reads MGCNPPYLLSYR. The chain crosses the membrane as a helical; Signal-anchor for type II membrane protein span at residues 13–38; the sequence is LRLLLLFTLCLTVLGWATSNYFVGAI. The Lumenal portion of the chain corresponds to 39-344; sequence QVIPRAKNFM…NITVDFWTAA (306 aa). A disulfide bridge links C77 with C118. UDP-alpha-D-galactose contacts are provided by residues 129-133, 168-170, and 195-196; these read PHRNR, FNR, and VD. C189 and C208 form a disulfide bridge. D196 lines the Mn(2+) pocket. N220 is a glycosylation site (N-linked (GlcNAc...) asparagine). The UDP-alpha-D-galactose site is built by Y224 and W256. 258–261 is a binding site for N-acetyl-D-glucosamine; sequence GEDD. H289 lines the Mn(2+) pocket. 289 to 291 provides a ligand contact to UDP-alpha-D-galactose; sequence HTR. R301 lines the N-acetyl-D-glucosamine pocket. The N-linked (GlcNAc...) asparagine glycan is linked to N335.

The protein belongs to the glycosyltransferase 7 family. As to quaternary structure, interacts with SLC35A2/UGT1. Mn(2+) is required as a cofactor.

It is found in the golgi apparatus membrane. Its subcellular location is the secreted. The catalysed reaction is N-acetyl-D-glucosamine + UDP-alpha-D-galactose = beta-D-galactosyl-(1-&gt;4)-N-acetyl-D-glucosamine + UDP + H(+). It catalyses the reaction a beta-D-GlcNAc-(1-&gt;3)-beta-D-Gal-(1-&gt;4)-beta-D-Glc-(1&lt;-&gt;1)-Cer(d18:1(4E)) + UDP-alpha-D-galactose = a neolactoside nLc4Cer(d18:1(4E)) + UDP + H(+). It carries out the reaction 3-O-{beta-D-galactosyl-(1-&gt;3)-[6-O-sulfo-N-acetyl-beta-D-glucosaminyl-(1-&gt;6)]-N-acetyl-alpha-D-galactosaminyl}-L-seryl-[protein] + UDP-alpha-D-galactose = 3-O-{beta-D-galactosyl-(1-&gt;3)-[beta-D-galactosyl-(1-&gt;4)-6-O-sulfo-N-acetyl-beta-D-glucosaminyl-(1-&gt;6)]-N-acetyl-alpha-D-galactosaminyl}-L-seryl-[protein] + UDP + H(+). The enzyme catalyses 3-O-{beta-D-galactosyl-(1-&gt;3)-[6-O-sulfo-N-acetyl-beta-D-glucosaminyl-(1-&gt;6)]-N-acetyl-alpha-D-galactosaminyl}-L-threonyl-[protein] + UDP-alpha-D-galactose = 3-O-{beta-D-galactosyl-(1-&gt;3)-[beta-D-galactosyl-(1-&gt;4)-6-O-sulfo-N-acetyl-beta-D-glucosaminyl-(1-&gt;6)]-N-acetyl-alpha-D-galactosaminyl}-L-threonyl-[protein] + UDP + H(+). The protein operates within protein modification; protein glycosylation. It functions in the pathway glycolipid biosynthesis. Its function is as follows. Galactose (Gal) transferase involved in the synthesis of terminal N-acetyllactosamine (LacNac) unit present on glycan chains of glycoproteins and glycosphingolipids. Catalyzes the transfer of Gal residue via a beta1-&gt;4 linkage from UDP-Gal to the non-reducing terminal N-acetyl glucosamine 6-O-sulfate (6-O-sulfoGlcNAc) in the linearly growing chain of both N- and O-linked keratan sulfate proteoglycans. Cooperates with B3GNT7 N-acetyl glucosamine transferase and CHST6 and CHST1 sulfotransferases to construct and elongate mono- and disulfated disaccharide units [-&gt;3Galbeta1-&gt;4(6-sulfoGlcNAcbeta)1-&gt;] and [-&gt;3(6-sulfoGalbeta)1-&gt;4(6-sulfoGlcNAcbeta)1-&gt;] within keratan sulfate polymer. Transfers Gal residue via a beta1-&gt;4 linkage to terminal 6-O-sulfoGlcNAc within the LacNac unit of core 2 O-glycans forming 6-sulfo-sialyl-Lewis X (sLex). May contribute to the generation of sLex epitope on mucin-type glycoproteins that serve as ligands for SELL/L-selectin, a major regulator of leukocyte migration. In the biosynthesis pathway of neolacto-series glycosphingolipids, transfers Gal residue via a beta1-&gt;4 linkage to terminal GlcNAc of a lactotriaosylceramide (Lc3Cer) acceptor to form a neolactotetraosylceramide. In Rattus norvegicus (Rat), this protein is Beta-1,4-galactosyltransferase 4 (B4galt4).